A 39-amino-acid polypeptide reads, in one-letter code: Phospholipase A2 (39 aa).

H36 is a catalytic residue.

This sequence belongs to the phospholipase A2 family. Group III subfamily. Ca(2+) serves as cofactor. As to expression, expressed by the venom gland.

Its subcellular location is the secreted. It carries out the reaction a 1,2-diacyl-sn-glycero-3-phosphocholine + H2O = a 1-acyl-sn-glycero-3-phosphocholine + a fatty acid + H(+). PLA2 catalyzes the calcium-dependent hydrolysis of the 2-acyl groups in 3-sn-phosphoglycerides. In Heloderma horridum horridum (Mexican beaded lizard), this protein is Phospholipase A2.